The primary structure comprises 1057 residues: Structural maintenance of chromosomes protein 6B (1057 aa).

The Zinc-hook domain maps to 22-1047 (ILRIKVENFM…ISMVKSHERI (1026 aa)). 49–56 (GQNGSGKS) serves as a coordination point for ATP. Residues 135–448 (KVSNKRDELR…NDLKKHQTNK (314 aa)) are a coiled coil. Positions 449–632 (VTAFGGDRVI…PPLSRRPSRL (184 aa)) are flexible hinge. Residues 633-904 (CASFDDQIKD…QDHREKLMAC (272 aa)) are a coiled coil. Residues 818-828 (KNKRKESDQKA) are compositionally biased toward basic and acidic residues. The disordered stretch occupies residues 818 to 845 (KNKRKESDQKASEICPESEIESLGPWDG).

This sequence belongs to the SMC family. SMC6 subfamily. As to quaternary structure, forms a heterodimer with SMC5. The SMC5-SMC6 complex is composed of the SMC5 and SMC6 heterodimer attached via their hinge domain and from the non-SMC subunit NSE4A or NSE4B. In terms of tissue distribution, expressed in seedlings, rosette leaves and floral buds.

It is found in the nucleus. It localises to the chromosome. Its function is as follows. Core component of the SMC5-SMC6 complex that promotes sister chromatid alignment after DNA damage and facilitates double-stranded DNA breaks (DSBs) repair via homologous recombination between sister chromatids. This chain is Structural maintenance of chromosomes protein 6B (SMC6B), found in Arabidopsis thaliana (Mouse-ear cress).